A 183-amino-acid chain; its full sequence is Glutathione-regulated potassium-efflux system ancillary protein KefG (183 aa).

Belongs to the NAD(P)H dehydrogenase (quinone) family. KefG subfamily. As to quaternary structure, interacts with KefB.

Its subcellular location is the cell inner membrane. The catalysed reaction is a quinone + NADH + H(+) = a quinol + NAD(+). It catalyses the reaction a quinone + NADPH + H(+) = a quinol + NADP(+). Functionally, regulatory subunit of a potassium efflux system that confers protection against electrophiles. Required for full activity of KefB. This Shigella flexneri serotype 5b (strain 8401) protein is Glutathione-regulated potassium-efflux system ancillary protein KefG.